The sequence spans 261 residues: 5'-nucleotidase SurE (261 aa).

Residues D8, D9, S43, and N96 each contribute to the a divalent metal cation site.

Belongs to the SurE nucleotidase family. A divalent metal cation is required as a cofactor.

It is found in the cytoplasm. It catalyses the reaction a ribonucleoside 5'-phosphate + H2O = a ribonucleoside + phosphate. In terms of biological role, nucleotidase that shows phosphatase activity on nucleoside 5'-monophosphates. This chain is 5'-nucleotidase SurE, found in Cereibacter sphaeroides (strain ATCC 17029 / ATH 2.4.9) (Rhodobacter sphaeroides).